Here is a 163-residue protein sequence, read N- to C-terminus: Cyclic pyranopterin monophosphate synthase (163 aa).

Substrate is bound by residues 76–78 and 114–115; these read LCH and ME. Aspartate 129 is a catalytic residue.

This sequence belongs to the MoaC family. Homohexamer; trimer of dimers.

The enzyme catalyses (8S)-3',8-cyclo-7,8-dihydroguanosine 5'-triphosphate = cyclic pyranopterin phosphate + diphosphate. It participates in cofactor biosynthesis; molybdopterin biosynthesis. Its function is as follows. Catalyzes the conversion of (8S)-3',8-cyclo-7,8-dihydroguanosine 5'-triphosphate to cyclic pyranopterin monophosphate (cPMP). The protein is Cyclic pyranopterin monophosphate synthase of Desulfovibrio desulfuricans (strain ATCC 27774 / DSM 6949 / MB).